The primary structure comprises 231 residues: Large ribosomal subunit protein uL1 (231 aa).

The protein belongs to the universal ribosomal protein uL1 family. Part of the 50S ribosomal subunit.

In terms of biological role, binds directly to 23S rRNA. The L1 stalk is quite mobile in the ribosome, and is involved in E site tRNA release. Protein L1 is also a translational repressor protein, it controls the translation of the L11 operon by binding to its mRNA. The protein is Large ribosomal subunit protein uL1 of Neisseria meningitidis serogroup A / serotype 4A (strain DSM 15465 / Z2491).